The chain runs to 422 residues: tRNA(Met) cytidine acetate ligase (422 aa).

Residues 7–20 (ITEY…HLYH), Gly-102, Asn-172, and Arg-197 contribute to the ATP site.

The protein belongs to the TmcAL family.

Its subcellular location is the cytoplasm. The enzyme catalyses cytidine(34) in elongator tRNA(Met) + acetate + ATP = N(4)-acetylcytidine(34) in elongator tRNA(Met) + AMP + diphosphate. Functionally, catalyzes the formation of N(4)-acetylcytidine (ac(4)C) at the wobble position of elongator tRNA(Met), using acetate and ATP as substrates. First activates an acetate ion to form acetyladenylate (Ac-AMP) and then transfers the acetyl group to tRNA to form ac(4)C34. In Halothermothrix orenii (strain H 168 / OCM 544 / DSM 9562), this protein is tRNA(Met) cytidine acetate ligase.